The chain runs to 487 residues: NADH-quinone oxidoreductase subunit N (487 aa).

A run of 13 helical transmembrane segments spans residues 9-29 (PVLPEIFMAVAGLALLMLGVF), 38-58 (VSVLVILALGAAMVLVSSLGG), 73-93 (FAGFAKGLVLVASAIATAMSL), 108-128 (VLVLFATLGMMMMISANDFIA), 161-181 (FVLGSLASGLLLYGISLLYGF), 208-228 (IIAGLVFVLAGLSFKVSAVPF), 240-260 (PTPVTSFFAVAPKIAALCLLV), 277-297 (VVTFIAIGSMFVGSFAAVVQT), 306-326 (SSIGHVGFVLVGIAAGSTLGI), 328-348 (GVLIYLAIYLFMNVGAFAVIL), 374-394 (AFVMAVLMFSMAGVPPLAGFW), 408-430 (LYTLSILGVLSSVVSTYYYLRIV), and 452-472 (LVMAVSTIVILAFTLIPAPLV).

The protein belongs to the complex I subunit 2 family. As to quaternary structure, NDH-1 is composed of 14 different subunits. Subunits NuoA, H, J, K, L, M, N constitute the membrane sector of the complex.

Its subcellular location is the cell inner membrane. The catalysed reaction is a quinone + NADH + 5 H(+)(in) = a quinol + NAD(+) + 4 H(+)(out). Functionally, NDH-1 shuttles electrons from NADH, via FMN and iron-sulfur (Fe-S) centers, to quinones in the respiratory chain. The immediate electron acceptor for the enzyme in this species is believed to be ubiquinone. Couples the redox reaction to proton translocation (for every two electrons transferred, four hydrogen ions are translocated across the cytoplasmic membrane), and thus conserves the redox energy in a proton gradient. The chain is NADH-quinone oxidoreductase subunit N from Paramagnetospirillum magneticum (strain ATCC 700264 / AMB-1) (Magnetospirillum magneticum).